The primary structure comprises 244 residues: Uridylate kinase (244 aa).

12-15 (KLSG) serves as a coordination point for ATP. Positions 20–25 (GERGVG) are involved in allosteric activation by GTP. Position 54 (Gly54) interacts with UMP. ATP is bound by residues Gly55 and Arg59. UMP contacts are provided by residues Asp74 and 135–142 (IGSPYFST). Positions 163, 169, and 172 each coordinate ATP.

The protein belongs to the UMP kinase family. Homohexamer.

It localises to the cytoplasm. It catalyses the reaction UMP + ATP = UDP + ADP. The protein operates within pyrimidine metabolism; CTP biosynthesis via de novo pathway; UDP from UMP (UMPK route): step 1/1. Its activity is regulated as follows. Allosterically activated by GTP. Inhibited by UTP. Catalyzes the reversible phosphorylation of UMP to UDP. This is Uridylate kinase from Streptococcus suis (strain 98HAH33).